A 385-amino-acid chain; its full sequence is Carbamoyl phosphate synthase small chain (385 aa).

Residues 1 to 196 (MEDALGQLAV…KLEKKKKFLF (196 aa)) are CPSase. Ser-51, Gly-245, and Gly-247 together coordinate L-glutamine. The Glutamine amidotransferase type-1 domain maps to 197 to 384 (HIVVYDFGVK…IKLLNQVKFS (188 aa)). The active-site Nucleophile is Cys-273. Positions 274, 277, 315, and 318 each coordinate L-glutamine. Catalysis depends on residues His-357 and Glu-359.

It belongs to the CarA family. As to quaternary structure, composed of two chains; the small (or glutamine) chain promotes the hydrolysis of glutamine to ammonia, which is used by the large (or ammonia) chain to synthesize carbamoyl phosphate. Tetramer of heterodimers (alpha,beta)4.

The enzyme catalyses hydrogencarbonate + L-glutamine + 2 ATP + H2O = carbamoyl phosphate + L-glutamate + 2 ADP + phosphate + 2 H(+). It catalyses the reaction L-glutamine + H2O = L-glutamate + NH4(+). It functions in the pathway amino-acid biosynthesis; L-arginine biosynthesis; carbamoyl phosphate from bicarbonate: step 1/1. It participates in pyrimidine metabolism; UMP biosynthesis via de novo pathway; (S)-dihydroorotate from bicarbonate: step 1/3. Functionally, small subunit of the glutamine-dependent carbamoyl phosphate synthetase (CPSase). CPSase catalyzes the formation of carbamoyl phosphate from the ammonia moiety of glutamine, carbonate, and phosphate donated by ATP, constituting the first step of 2 biosynthetic pathways, one leading to arginine and/or urea and the other to pyrimidine nucleotides. The small subunit (glutamine amidotransferase) binds and cleaves glutamine to supply the large subunit with the substrate ammonia. The sequence is that of Carbamoyl phosphate synthase small chain from Buchnera aphidicola subsp. Schizaphis graminum (strain Sg).